Reading from the N-terminus, the 394-residue chain is Nuclear pore glycoprotein p62 (394 aa).

5 consecutive repeat copies span residues 22–23, 50–51, 75–76, 77–78, and 116–117. The interval 22-117 is 5 X 2 AA repeats of F-G; sequence FGLSTGTPAA…GTSAAPPAFG (96 aa). Positions 45-57 are enriched in low complexity; it reads KTTFSFGTPAPTA. Residues 45 to 73 form a disordered region; it reads KTTFSFGTPAPTAGIGGGDADNSKAQAPP. A coiled-coil region spans residues 211–341; it reads SYHQLEEHIN…DNLNEANKGQ (131 aa).

The protein belongs to the nucleoporin NSP1/NUP62 family. As to expression, expressed in adult male accessory glands (at protein level).

The protein resides in the nucleus. Its subcellular location is the chromosome. It is found in the nucleus envelope. It localises to the nuclear pore complex. The protein localises to the cytoplasm. The protein resides in the cytoskeleton. Its subcellular location is the spindle pole. It is found in the microtubule organizing center. It localises to the centrosome. Its function is as follows. Essential component of the nuclear pore complex. The N-terminal is probably involved in nucleocytoplasmic transport. The C-terminal is involved in protein-protein interaction probably via coiled-coil formation, promotes its association with centrosomes and may function in anchorage of Nup62 to the pore complex. Binds to transcriptionally active genes. Negatively regulates chromatin attachment to the nuclear envelope, probably by preventing chromatin tethering by Nup154. The sequence is that of Nuclear pore glycoprotein p62 from Drosophila melanogaster (Fruit fly).